Reading from the N-terminus, the 173-residue chain is uncharacterized protein (173 aa).

The segment at 1–23 is disordered; it reads ELTSVAGSGRVDSTPLGSRGVTD.

In terms of tissue distribution, component of the acid-insoluble and acid-soluble organic matrix of calcified layers of the shell (at protein level).

The protein resides in the secreted. This is an uncharacterized protein from Lottia gigantea (Giant owl limpet).